A 202-amino-acid polypeptide reads, in one-letter code: Josephin-1 (202 aa).

Position 15 is a phosphoserine (Ser15). Residues 23-202 form the Josephin domain; sequence PPQIYHEKQR…EAHQSWRTDV (180 aa). The active-site Nucleophile is Cys36. His139 (proton acceptor) is an active-site residue.

As to quaternary structure, interacts with beta-actin/ACTB. Post-translationally, monoubiquitinated. Ubiquitination activates deubiquitination activity in vitro.

The protein localises to the cell membrane. Its subcellular location is the cytoplasm. It carries out the reaction Thiol-dependent hydrolysis of ester, thioester, amide, peptide and isopeptide bonds formed by the C-terminal Gly of ubiquitin (a 76-residue protein attached to proteins as an intracellular targeting signal).. Deubiquitinates monoubiquitinated probes (in vitro). When ubiquitinated, cleaves 'Lys-63'-linked and 'Lys-48'-linked poly-ubiquitin chains (in vitro), hence may act as a deubiquitinating enzyme. May increase macropinocytosis and suppress clathrin- and caveolae-mediated endocytosis. May enhance membrane dynamics and cell motility independently of its catalytic activity. This Pongo abelii (Sumatran orangutan) protein is Josephin-1 (JOSD1).